The sequence spans 310 residues: Ribosomal RNA small subunit methyltransferase H (310 aa).

S-adenosyl-L-methionine-binding positions include 32 to 34 (GGH), aspartate 52, phenylalanine 79, aspartate 100, and glutamine 107.

Belongs to the methyltransferase superfamily. RsmH family.

The protein resides in the cytoplasm. It carries out the reaction cytidine(1402) in 16S rRNA + S-adenosyl-L-methionine = N(4)-methylcytidine(1402) in 16S rRNA + S-adenosyl-L-homocysteine + H(+). Its function is as follows. Specifically methylates the N4 position of cytidine in position 1402 (C1402) of 16S rRNA. This chain is Ribosomal RNA small subunit methyltransferase H, found in Geobacillus kaustophilus (strain HTA426).